The primary structure comprises 663 residues: DNA topoisomerase 4 subunit B (663 aa).

ATP is bound by residues Y7, N47, D74, 114–120 (GLHGVGA), and K341. The tract at residues 386 to 416 (REAARKAREDARSGKKNKRKDTLLSGKLTPA) is disordered. Residues 387–398 (EAARKAREDARS) show a composition bias toward basic and acidic residues. A Toprim domain is found at 424–538 (NELYLVEGDS…ADRVFIALPP (115 aa)). The Mg(2+) site is built by E430, D503, and D505.

Belongs to the type II topoisomerase family. ParE type 2 subfamily. Heterotetramer composed of ParC and ParE. It depends on Mg(2+) as a cofactor. Mn(2+) is required as a cofactor. The cofactor is Ca(2+).

It catalyses the reaction ATP-dependent breakage, passage and rejoining of double-stranded DNA.. Its function is as follows. Topoisomerase IV is essential for chromosome segregation. It relaxes supercoiled DNA. Performs the decatenation events required during the replication of a circular DNA molecule. The polypeptide is DNA topoisomerase 4 subunit B (Staphylococcus aureus (strain MSSA476)).